Consider the following 303-residue polypeptide: Protoheme IX farnesyltransferase (303 aa).

9 helical membrane passes run 17–37, 42–62, 91–111, 114–134, 142–162, 168–188, 208–228, 231–251, and 270–290; these read GVVM…TEPA, LATF…SAAI, AAIT…YFLV, LTAW…TLYL, IVIG…AVTG, AWLL…ALAI, IPFT…CTLL, LTGM…LVFL, and FGYS…DHYL.

The protein belongs to the UbiA prenyltransferase family. Protoheme IX farnesyltransferase subfamily.

It localises to the cell inner membrane. It carries out the reaction heme b + (2E,6E)-farnesyl diphosphate + H2O = Fe(II)-heme o + diphosphate. It participates in porphyrin-containing compound metabolism; heme O biosynthesis; heme O from protoheme: step 1/1. In terms of biological role, converts heme B (protoheme IX) to heme O by substitution of the vinyl group on carbon 2 of heme B porphyrin ring with a hydroxyethyl farnesyl side group. This chain is Protoheme IX farnesyltransferase, found in Alcanivorax borkumensis (strain ATCC 700651 / DSM 11573 / NCIMB 13689 / SK2).